The following is a 131-amino-acid chain: Rhodopsin (131 aa).

Over 1–16 the chain is Extracellular; sequence CGIDYYTRAPGYNNES. An N-linked (GlcNAc...) asparagine glycan is attached at Asn-14. Residues 17-38 form a helical membrane-spanning segment; it reads FVIYMFIVHFLIPLFIISFCYG. The Cytoplasmic segment spans residues 39-66; that stretch reads NLLCAVKAAAAAQEESETTQRAEREVTR. Residues 67–88 form a helical membrane-spanning segment; that stretch reads MVIMMVISYLVSWVPYASVAWY. Residues 89 to 100 lie on the Extracellular side of the membrane; it reads IFSNQGSEFGPV. The chain crosses the membrane as a helical span at residues 101–122; that stretch reads FMTIPAFFAKSSALYNPLIYVL. Position 110 is an N6-(retinylidene)lysine (Lys-110). The Cytoplasmic portion of the chain corresponds to 123–131; it reads MNKQFRHCM.

Belongs to the G-protein coupled receptor 1 family. Opsin subfamily. In terms of processing, phosphorylated on some or all of the serine and threonine residues present in the C-terminal region. Post-translationally, contains one covalently linked retinal chromophore.

The protein localises to the membrane. The protein resides in the cell projection. It is found in the cilium. It localises to the photoreceptor outer segment. Photoreceptor required for image-forming vision at low light intensity. While most salt water fish species use retinal as chromophore, most freshwater fish use 3-dehydroretinal, or a mixture of retinal and 3-dehydroretinal. Light-induced isomerization of 11-cis to all-trans retinal triggers a conformational change that activates signaling via G-proteins. Subsequent receptor phosphorylation mediates displacement of the bound G-protein alpha subunit by arrestin and terminates signaling. The polypeptide is Rhodopsin (rho) (Coregonus autumnalis (Arctic cisco)).